A 219-amino-acid polypeptide reads, in one-letter code: LHFPL tetraspan subfamily member 5 protein (219 aa).

Topologically, residues 1–24 (MVKLLPAQEAAKIYHTNYVRNSRA) are cytoplasmic. The helical transmembrane segment at 25 to 45 (VGVMWGTLTICFSVLVMALFI) threads the bilayer. The Extracellular segment spans residues 46-98 (QPYWIGDSVSTPQAGYFGLFSYCVGNVLSSELICKGGPLDFSSIPSRAFKTAM). Residues 99-119 (FFVALAMFLIIGSIICFSLFF) traverse the membrane as a helical segment. At 120–128 (VCNTATVYK) the chain is on the cytoplasmic side. Residues 129–149 (ICAWMQLAAATGLMIGCLVYP) traverse the membrane as a helical segment. Over 150–178 (DGWDSSEVRRMCGEQTGKYTLGHCTIRWA) the chain is Extracellular. The helical transmembrane segment at 179–199 (FMLAILSIGDALILSFLAFVL) threads the bilayer. Residues 200 to 219 (GYRQDKLLPDDYKADGNEEV) are Cytoplasmic-facing.

Belongs to the LHFP family. In terms of assembly, forms the MET channel composed of TMC (TMC1 or TMC2), TMIE, TOMT, CIB (CIB2 or CIB3), LHPL5 and PCDH15. Interaction with PCDH15 is required for efficient localization to hair bundles.

Its subcellular location is the cell membrane. Auxiliary subunit of the mechanotransducer (MET) non-specific cation channel complex located at the tips of the shorter stereocilia of cochlear hair cells and that mediates sensory transduction in the auditory system. The MET complex is composed of two dimeric pore-forming ion-conducting transmembrane TMC (TMC1 or TMC2) subunits, and aided by several auxiliary proteins including LHFPL5, TMIE, CIB2/3 and TOMT, and the tip-link PCDH15. Functionally couples PCDH15 to the transduction channel. The sequence is that of LHFPL tetraspan subfamily member 5 protein from Rattus norvegicus (Rat).